We begin with the raw amino-acid sequence, 306 residues long: Homoserine O-succinyltransferase (306 aa).

Cysteine 142 (acyl-thioester intermediate) is an active-site residue. The substrate site is built by lysine 163 and serine 192. Histidine 233 serves as the catalytic Proton acceptor. Glutamate 235 is a catalytic residue. A substrate-binding site is contributed by arginine 247.

This sequence belongs to the MetA family.

It localises to the cytoplasm. The enzyme catalyses L-homoserine + succinyl-CoA = O-succinyl-L-homoserine + CoA. The protein operates within amino-acid biosynthesis; L-methionine biosynthesis via de novo pathway; O-succinyl-L-homoserine from L-homoserine: step 1/1. Its function is as follows. Transfers a succinyl group from succinyl-CoA to L-homoserine, forming succinyl-L-homoserine. This is Homoserine O-succinyltransferase from Pelagibacterium halotolerans (strain DSM 22347 / JCM 15775 / CGMCC 1.7692 / B2).